Consider the following 380-residue polypeptide: Zinc metalloproteinase-like protein nas-21 (380 aa).

Positions 1-24 (MNYFITFFFMHIAVLNFYFRFSNG) are cleaved as a signal peptide. One can recognise a Peptidase M12A domain in the interval 46–234 (QALRMDNEPR…LMINEYYQCS (189 aa)). Residue Asn-87 is glycosylated (N-linked (GlcNAc...) asparagine). 2 cysteine pairs are disulfide-bonded: Cys-90-Cys-233 and Cys-110-Cys-130. Glu-138 is an active-site residue. N-linked (GlcNAc...) asparagine glycosylation is found at Asn-253, Asn-269, Asn-283, and Asn-304.

The protein resides in the secreted. Functionally, may lack metalloprotease activity. The chain is Zinc metalloproteinase-like protein nas-21 (nas-21) from Caenorhabditis elegans.